Consider the following 96-residue polypeptide: Class I hydrophobin 2 (96 aa).

Positions 1-15 (MFKALIVALAAVAAA) are cleaved as a signal peptide. 4 disulfides stabilise this stretch: C28–C77, C34–C71, C35–C55, and C78–C91.

Belongs to the fungal hydrophobin family.

The protein localises to the secreted. It localises to the cell wall. Aerial growth, conidiation, and dispersal of filamentous fungi in the environment rely upon a capability of their secreting small amphipathic proteins called hydrophobins (HPBs) with low sequence identity. Class I can self-assemble into an outermost layer of rodlet bundles on aerial cell surfaces, conferring cellular hydrophobicity that supports fungal growth, development and dispersal; whereas Class II form highly ordered films at water-air interfaces through intermolecular interactions but contribute nothing to the rodlet structure. Hyd2 plays a neglectable role in hyphal growth and asexual development and does not seem involved in cellular hydrophobicity, conidial adhesion, stress tolerance nor insect pathogenicity. The sequence is that of Class I hydrophobin 2 from Metarhizium robertsii (strain ARSEF 23 / ATCC MYA-3075) (Metarhizium anisopliae (strain ARSEF 23)).